We begin with the raw amino-acid sequence, 538 residues long: NAD(P)H-quinone oxidoreductase chain 4 (538 aa).

14 helical membrane passes run 11–31 (FPWLSLSILFPIVGALIVPFI), 43–63 (YALIISLITFLITVAAYFKGF), 95–115 (MPLILLTSFITSLAVLAAWPV), 119–139 (PKLFFFLILAMDGGQIAVFAV), 143–163 (LLFFLAWELELFPVYLFLAIW), 175–195 (FIIYTAGSSLFILLAGLAMGF), 217–237 (GFQLLCYSGLLIAFGVKLPIV), 251–271 (TAPVHMLLAGILLKMGGYALL), 285–305 (FAPLLIVLGVVNIIYAALTSF), 314–334 (IAYSSISHMGFVLIGIGSFSS), 340–360 (AMLQMVSHGLIGASLFFLVGA), 382–404 (IMFALWTACAFASLALPGMSGFI), 425–445 (IVVASLAAIGVILTPIYLLSM), and 472–492 (IYIIACLLVPIIGIGLYPKIM).

The protein belongs to the complex I subunit 4 family.

It is found in the cellular thylakoid membrane. The catalysed reaction is a plastoquinone + NADH + (n+1) H(+)(in) = a plastoquinol + NAD(+) + n H(+)(out). It catalyses the reaction a plastoquinone + NADPH + (n+1) H(+)(in) = a plastoquinol + NADP(+) + n H(+)(out). In terms of biological role, NDH-1 shuttles electrons from NAD(P)H, via FMN and iron-sulfur (Fe-S) centers, to quinones in the respiratory chain. The immediate electron acceptor for the enzyme in this species is believed to be plastoquinone. Couples the redox reaction to proton translocation (for every two electrons transferred, four hydrogen ions are translocated across the cytoplasmic membrane), and thus conserves the redox energy in a proton gradient. The polypeptide is NAD(P)H-quinone oxidoreductase chain 4 (Prochlorococcus marinus (strain NATL1A)).